The primary structure comprises 276 residues: Putative ABC transporter ATP-binding protein MA_4021 (276 aa).

The 243-residue stretch at 5 to 247 (FDLKNISYSY…DLNLLLSTNL (243 aa)) folds into the ABC transporter domain. ATP is bound at residue 38–45 (GSNGSGKS).

This sequence belongs to the ABC transporter superfamily.

It is found in the cell membrane. Probably part of an ABC transporter complex. Responsible for energy coupling to the transport system. In Methanosarcina acetivorans (strain ATCC 35395 / DSM 2834 / JCM 12185 / C2A), this protein is Putative ABC transporter ATP-binding protein MA_4021.